Reading from the N-terminus, the 250-residue chain is Insertion sequence IS232 putative ATP-binding protein (250 aa).

An ATP-binding site is contributed by 108 to 115 (GPSGVGKT).

This sequence belongs to the IS21/IS1162 putative ATP-binding protein family.

This is Insertion sequence IS232 putative ATP-binding protein from Bacillus thuringiensis subsp. berliner.